The following is a 452-amino-acid chain: Probable cytosolic iron-sulfur protein assembly protein 1 (452 aa).

Residues 1–12 are compositionally biased toward pro residues; the sequence is MPPPTTPTPNPS. Residues 1-24 form a disordered region; the sequence is MPPPTTPTPNPSIPQKATLTPLPP. WD repeat units lie at residues 70 to 121, 161 to 200, 213 to 267, 273 to 319, 340 to 379, and 411 to 452; these read GHAR…DAAA, GHENEVKSLAFSPGGQYLATSSRDKSVWIWEDVSSGQGGD, EHDG…EWVC, GHGG…FGGV, VHTRDVYSVSWSADTGLVASTGSDGIIAVYAEESAPEDVA, and YEVN…VRIS.

This sequence belongs to the WD repeat CIA1 family.

Its function is as follows. Essential component of the cytosolic iron-sulfur (Fe/S) protein assembly machinery. Required for the maturation of extramitochondrial Fe/S proteins. In Chaetomium globosum (strain ATCC 6205 / CBS 148.51 / DSM 1962 / NBRC 6347 / NRRL 1970) (Soil fungus), this protein is Probable cytosolic iron-sulfur protein assembly protein 1.